The primary structure comprises 551 residues: Glucans biosynthesis protein D (551 aa).

Positions 1-32 (MDRRRFIKGSMAMAAVCGTSGIASLFSQAAFA) form a signal peptide, tat-type signal.

Belongs to the OpgD/OpgG family. Predicted to be exported by the Tat system. The position of the signal peptide cleavage has not been experimentally proven.

The protein resides in the periplasm. It participates in glycan metabolism; osmoregulated periplasmic glucan (OPG) biosynthesis. Probably involved in the control of the structural glucose backbone of osmoregulated periplasmic glucans (OPGs). This chain is Glucans biosynthesis protein D, found in Escherichia coli O139:H28 (strain E24377A / ETEC).